The chain runs to 428 residues: Flap endonuclease 1-B (428 aa).

The interval methionine 1 to arginine 132 is N-domain. Aspartate 34 serves as a coordination point for Mg(2+). Arginine 98 serves as a coordination point for DNA. Aspartate 114, glutamate 186, glutamate 188, aspartate 207, and aspartate 209 together coordinate Mg(2+). The segment at alanine 150–histidine 281 is I-domain. Glutamate 186 serves as a coordination point for DNA. The DNA site is built by glycine 259 and aspartate 261. Aspartate 261 is a binding site for Mg(2+).

It belongs to the XPG/RAD2 endonuclease family. FEN1 subfamily. Interacts with PCNA. Three molecules of FEN1 bind to one PCNA trimer with each molecule binding to one PCNA monomer. PCNA stimulates the nuclease activity without altering cleavage specificity. Requires Mg(2+) as cofactor. Phosphorylated. Phosphorylation upon DNA damage induces relocalization to the nuclear plasma.

It localises to the nucleus. The protein localises to the nucleolus. It is found in the nucleoplasm. Its subcellular location is the mitochondrion. Its function is as follows. Structure-specific nuclease with 5'-flap endonuclease and 5'-3' exonuclease activities involved in DNA replication and repair. During DNA replication, cleaves the 5'-overhanging flap structure that is generated by displacement synthesis when DNA polymerase encounters the 5'-end of a downstream Okazaki fragment. It enters the flap from the 5'-end and then tracks to cleave the flap base, leaving a nick for ligation. Also involved in the long patch base excision repair (LP-BER) pathway, by cleaving within the apurinic/apyrimidinic (AP) site-terminated flap. Acts as a genome stabilization factor that prevents flaps from equilibrating into structures that lead to duplications and deletions. Also possesses 5'-3' exonuclease activity on nicked or gapped double-stranded DNA, and exhibits RNase H activity. Also involved in replication and repair of rDNA and in repairing mitochondrial DNA. This chain is Flap endonuclease 1-B, found in Sorghum bicolor (Sorghum).